Reading from the N-terminus, the 461-residue chain is Ribitol-5-phosphate transferase FKTN (461 aa).

Residues 1–7 lie on the Cytoplasmic side of the membrane; the sequence is MSRINKN. Positions 6–27 are required and sufficient for interaction with POMGNT1; sequence KNVVLALLTLTSSAFLLFQLYY. A helical; Signal-anchor for type II membrane protein membrane pass occupies residues 8–28; that stretch reads VVLALLTLTSSAFLLFQLYYY. Topologically, residues 29 to 461 are lumenal; it reads KHYLSARNGP…SEWDEVIQLY (433 aa). N92 is a glycosylation site (N-linked (GlcNAc...) asparagine).

It belongs to the LicD transferase family. As to quaternary structure, forms a complex composed of FKTN/fukutin, FKRP and RXYLT1/TMEM5. Interacts (via transmembrane domain) with POMGNT1; the interaction is direct and is required for normal POMGNT1 location in Golgi membranes. As to expression, expressed in the retina, with highest levels found in the inner segments of photoreceptors and the outer plexiform layer (at protein level). Expressed at lower levels in the inner and outer nuclear layers, the inner plexiform layers, and the ganglion cell layers of the retina (at protein level). Expressed in the heart, brain, spleen, lung, liver, skeletal muscle, kidney and testis.

The protein localises to the golgi apparatus membrane. It localises to the cytoplasm. Its subcellular location is the nucleus. The protein resides in the endoplasmic reticulum. The catalysed reaction is 3-O-[beta-D-GalNAc-(1-&gt;3)-beta-D-GlcNAc-(1-&gt;4)-(O-6-P-alpha-D-Man)]-Thr-[protein] + CDP-L-ribitol = 3-O-[Rib-ol-P-3-beta-D-GalNAc-(1-&gt;3)-beta-D-GlcNAc-(1-&gt;4)-(O-6-P-alpha-D-Man)]-Thr-[protein] + CMP + H(+). It participates in protein modification; protein glycosylation. Functionally, catalyzes the transfer of CDP-ribitol to the distal N-acetylgalactosamine of the phosphorylated O-mannosyl trisaccharide (N-acetylgalactosamine-beta-3-N-acetylglucosamine-beta-4-(phosphate-6-)mannose), a carbohydrate structure present in alpha-dystroglycan (DAG1). This constitutes the first step in the formation of the ribitol 5-phosphate tandem repeat which links the phosphorylated O-mannosyl trisaccharide to the ligand binding moiety composed of repeats of 3-xylosyl-alpha-1,3-glucuronic acid-beta-1. Required for normal location of POMGNT1 in Golgi membranes, and for normal POMGNT1 activity. May interact with and reinforce a large complex encompassing the outside and inside of muscle membranes. Could be involved in brain development. The polypeptide is Ribitol-5-phosphate transferase FKTN (Mus musculus (Mouse)).